The chain runs to 190 residues: Interferon alpha-11 (190 aa).

The N-terminal stretch at 1–23 (MARLCAFLMILIVMSYWSTCSLG) is a signal peptide. Cystine bridges form between cysteine 24/cysteine 122 and cysteine 52/cysteine 162. Asparagine 101 carries N-linked (GlcNAc...) asparagine glycosylation.

It belongs to the alpha/beta interferon family. Post-translationally, N-glycosylated.

The protein localises to the secreted. Its function is as follows. Has antiviral and antiproliferative activities. Produced by macrophages and stimulates the production of two enzymes: a protein kinase and an oligoadenylate synthetase. During viral infection, mediates antiviral effect, either directly by inducing interferon-stimulated genes, either indirectly through stimulation of natural killer cells enabling them to control viral replication. The chain is Interferon alpha-11 (Ifna11) from Mus musculus (Mouse).